A 336-amino-acid chain; its full sequence is Sex determination protein tasselseed-2 (336 aa).

59–83 lines the NAD(+) pocket; that stretch reads IVTGGARGIGEAIVRLFAKHGARVV. S194 lines the substrate pocket. The Proton acceptor role is filled by Y207.

Belongs to the short-chain dehydrogenases/reductases (SDR) family.

Required for stage-specific floral organ abortion. This Zea mays (Maize) protein is Sex determination protein tasselseed-2 (TS2).